The chain runs to 198 residues: Dephospho-CoA kinase (198 aa).

Residues 3 to 198 enclose the DPCK domain; the sequence is LIGLTGGIAS…VDALWAGLRG (196 aa). 11–16 is a binding site for ATP; the sequence is ASGKST.

Belongs to the CoaE family.

It localises to the cytoplasm. The enzyme catalyses 3'-dephospho-CoA + ATP = ADP + CoA + H(+). It participates in cofactor biosynthesis; coenzyme A biosynthesis; CoA from (R)-pantothenate: step 5/5. Catalyzes the phosphorylation of the 3'-hydroxyl group of dephosphocoenzyme A to form coenzyme A. The protein is Dephospho-CoA kinase of Leifsonia xyli subsp. xyli (strain CTCB07).